The chain runs to 162 residues: Caveolin-2 (162 aa).

Residues Met-1 to Lys-86 are Cytoplasmic-facing. Residue Tyr-19 is modified to Phosphotyrosine; by SRC. Residues Ser-20 and Ser-23 each carry the phosphoserine modification. Phosphotyrosine; by SRC is present on Tyr-27. Positions Phe-87–Leu-107 form an intramembrane region, helical. At Ser-108 to Asp-162 the chain is on the cytoplasmic side.

The protein belongs to the caveolin family. In terms of assembly, monomer or homodimer. Interacts with CAV1; the interaction forms a stable heterooligomeric complex that is required for targeting to lipid rafts and for caveolae formation. Tyrosine phosphorylated forms do not form heterooligomers with the Tyr-19-phosphorylated form existing as a monomer or dimer, and the Tyr-27-form as a monomer only. Interacts (tyrosine phosphorylated form) with the SH2 domain-containing proteins, RASA1, NCK1 and SRC. Interacts (tyrosine phosphorylated form) with INSR, the interaction (Tyr-27-phosphorylated form) is increased on insulin stimulation. Interacts (Tyr-19 phosphorylated form) with MAPK1 (phosphorylated form); the interaction, promoted by insulin, leads to nuclear location and MAPK1 activation. Interacts with STAT3; the interaction is increased on insulin-induced tyrosine phosphorylation leading to STAT activation. Phosphorylated on serine and tyrosine residues. CAV1 promotes phosphorylation on Ser-23 which then targets the complex to the plasma membrane, lipid rafts and caveolae. Phosphorylation on both Tyr-19 and Tyr-27 is required for insulin-induced 'Ser-727' phosphorylation of STAT3 and its activation. Phosphorylation on Tyr-19 is required for insulin-induced phosphorylation of MAPK1 and DNA binding of STAT3. Tyrosine phosphorylation is induced by both EGF and insulin.

It is found in the nucleus. It localises to the cytoplasm. The protein localises to the golgi apparatus membrane. The protein resides in the cell membrane. Its subcellular location is the membrane. It is found in the caveola. Functionally, may act as a scaffolding protein within caveolar membranes. Interacts directly with G-protein alpha subunits and can functionally regulate their activity. Acts as an accessory protein in conjunction with CAV1 in targeting to lipid rafts and driving caveolae formation. Positive regulator of cellular mitogenesis of the MAPK signaling pathway. Required for the insulin-stimulated nuclear translocation and activation of MAPK1 and STAT3, and the subsequent regulation of cell cycle progression. The polypeptide is Caveolin-2 (CAV2) (Equus caballus (Horse)).